The sequence spans 557 residues: Formate--tetrahydrofolate ligase (557 aa).

67-74 serves as a coordination point for ATP; it reads TPAGEGKS.

Belongs to the formate--tetrahydrofolate ligase family.

The catalysed reaction is (6S)-5,6,7,8-tetrahydrofolate + formate + ATP = (6R)-10-formyltetrahydrofolate + ADP + phosphate. Its pathway is one-carbon metabolism; tetrahydrofolate interconversion. This chain is Formate--tetrahydrofolate ligase, found in Latilactobacillus sakei subsp. sakei (strain 23K) (Lactobacillus sakei subsp. sakei).